The sequence spans 273 residues: Large ribosomal subunit protein uL2 (273 aa).

The tract at residues 228 to 273 (VDHPHGGGEGKTSGGRHPVTPWGFPTKGKKTRKNKRTSKFIVKKRK) is disordered. A compositionally biased stretch (basic residues) spans 254-273 (KGKKTRKNKRTSKFIVKKRK).

The protein belongs to the universal ribosomal protein uL2 family. In terms of assembly, part of the 50S ribosomal subunit. Forms a bridge to the 30S subunit in the 70S ribosome.

Functionally, one of the primary rRNA binding proteins. Required for association of the 30S and 50S subunits to form the 70S ribosome, for tRNA binding and peptide bond formation. It has been suggested to have peptidyltransferase activity; this is somewhat controversial. Makes several contacts with the 16S rRNA in the 70S ribosome. This chain is Large ribosomal subunit protein uL2, found in Rickettsia akari (strain Hartford).